Consider the following 67-residue polypeptide: Protein Tpau_2998 (67 aa).

The sequence is that of Protein Tpau_2998 from Tsukamurella paurometabola (strain ATCC 8368 / DSM 20162 / CCUG 35730 / CIP 100753 / JCM 10117 / KCTC 9821 / NBRC 16120 / NCIMB 702349 / NCTC 13040) (Corynebacterium paurometabolum).